We begin with the raw amino-acid sequence, 908 residues long: Protein translocase subunit SecA (908 aa).

ATP-binding positions include Gln90, 108–112 (GEGKT), and Asp503. Low complexity predominate over residues 846 to 864 (AAAAEAPVAPAPQPAAAAP). Residues 846 to 884 (AAAAEAPVAPAPQPAAAAPQPTPELVGAEAGEPDPAAWG) form a disordered region. Positions 892, 894, 903, and 904 each coordinate Zn(2+).

Belongs to the SecA family. Monomer and homodimer. Part of the essential Sec protein translocation apparatus which comprises SecA, SecYEG and auxiliary proteins SecDF-YajC and YidC. It depends on Zn(2+) as a cofactor.

It is found in the cell inner membrane. It localises to the cytoplasm. It carries out the reaction ATP + H2O + cellular proteinSide 1 = ADP + phosphate + cellular proteinSide 2.. Functionally, part of the Sec protein translocase complex. Interacts with the SecYEG preprotein conducting channel. Has a central role in coupling the hydrolysis of ATP to the transfer of proteins into and across the cell membrane, serving both as a receptor for the preprotein-SecB complex and as an ATP-driven molecular motor driving the stepwise translocation of polypeptide chains across the membrane. The polypeptide is Protein translocase subunit SecA (Cereibacter sphaeroides (strain KD131 / KCTC 12085) (Rhodobacter sphaeroides)).